Here is a 331-residue protein sequence, read N- to C-terminus: ADP-L-glycero-D-manno-heptose-6-epimerase (331 aa).

NADP(+) contacts are provided by residues F11 to I12, D32 to N33, K39, K54, L75 to T79, and N92. The Proton acceptor role is filled by Y139. K143 is an NADP(+) binding site. Residue N168 participates in substrate binding. 2 residues coordinate NADP(+): V169 and K177. Catalysis depends on K177, which acts as the Proton acceptor. Substrate is bound by residues R179, Q186, F200–H203, H213, and Y292.

The protein belongs to the NAD(P)-dependent epimerase/dehydratase family. HldD subfamily. As to quaternary structure, homopentamer. The cofactor is NADP(+).

It carries out the reaction ADP-D-glycero-beta-D-manno-heptose = ADP-L-glycero-beta-D-manno-heptose. Its pathway is nucleotide-sugar biosynthesis; ADP-L-glycero-beta-D-manno-heptose biosynthesis; ADP-L-glycero-beta-D-manno-heptose from D-glycero-beta-D-manno-heptose 7-phosphate: step 4/4. In terms of biological role, catalyzes the interconversion between ADP-D-glycero-beta-D-manno-heptose and ADP-L-glycero-beta-D-manno-heptose via an epimerization at carbon 6 of the heptose. The sequence is that of ADP-L-glycero-D-manno-heptose-6-epimerase from Cupriavidus pinatubonensis (strain JMP 134 / LMG 1197) (Cupriavidus necator (strain JMP 134)).